We begin with the raw amino-acid sequence, 133 residues long: ATP synthase epsilon chain, chloroplastic (133 aa).

This sequence belongs to the ATPase epsilon chain family. As to quaternary structure, F-type ATPases have 2 components, CF(1) - the catalytic core - and CF(0) - the membrane proton channel. CF(1) has five subunits: alpha(3), beta(3), gamma(1), delta(1), epsilon(1). CF(0) has three main subunits: a, b and c.

It localises to the plastid. It is found in the chloroplast thylakoid membrane. In terms of biological role, produces ATP from ADP in the presence of a proton gradient across the membrane. This Nicotiana sylvestris (Wood tobacco) protein is ATP synthase epsilon chain, chloroplastic.